We begin with the raw amino-acid sequence, 378 residues long: Spermidine/putrescine import ATP-binding protein PotA (378 aa).

The ABC transporter domain occupies 18 to 248 (VLLSGISKSF…PKNLFVAGFI (231 aa)). 50 to 57 (GPSGCGKT) is a binding site for ATP.

The protein belongs to the ABC transporter superfamily. Spermidine/putrescine importer (TC 3.A.1.11.1) family. As to quaternary structure, the complex is composed of two ATP-binding proteins (PotA), two transmembrane proteins (PotB and PotC) and a solute-binding protein (PotD).

It is found in the cell inner membrane. It carries out the reaction ATP + H2O + polyamine-[polyamine-binding protein]Side 1 = ADP + phosphate + polyamineSide 2 + [polyamine-binding protein]Side 1.. Part of the ABC transporter complex PotABCD involved in spermidine/putrescine import. Responsible for energy coupling to the transport system. The sequence is that of Spermidine/putrescine import ATP-binding protein PotA from Salmonella paratyphi A (strain ATCC 9150 / SARB42).